Reading from the N-terminus, the 82-residue chain is Three-finger toxin MALT0063C (82 aa).

The first 21 residues, 1-21, serve as a signal peptide directing secretion; the sequence is MRTLLLTLVVVTIVCLDLGNS. Disulfide bonds link Cys24/Cys42, Cys35/Cys60, Cys64/Cys72, and Cys73/Cys78.

It belongs to the three-finger toxin family. Short-chain subfamily. As to expression, expressed by the venom gland.

The protein localises to the secreted. This chain is Three-finger toxin MALT0063C, found in Micrurus altirostris (Uruguayan coral snake).